A 1430-amino-acid polypeptide reads, in one-letter code: MGARASVLSGGKLDAWEKIRLRPGGKKKYRLKHLVWASRELERFALDPGLLETSEGCRKIIGQLQPSLQTGSEELKSLYNTIAVLYYVHQKVEVKDTKEALEKLEEEQNKGRQKTQQATAEKGVSQNYPIVQNLQGQMVHQSLSPRTLNAWVKVIEEKAFSPEVIPMFSALSEGATPQDLNTMLNTVGGHQAAMQMLKDTINEEAAEWDRLHPTQAGPIPPGQIREPRGSDIAGTTSTLQEQIQWMTGNPPVPVGEMYKRWIILGLNKIVRMYSPVGILDIRQGPKEPFRDYVDRFFKTLRAEQATQEVKGWMTDTLLVQNANPDCKTILKALGPGATLEEMMTACQGVGGPSHKARVLAEAMSQATNTAIMMQKSNFKGQRRIVKCFNCGKEGHIAKNCRAPRKKGCWKCGREGHQMKDCTERQAKFFRENLAFQQGEARKLHPEQARAVSPASRELQVRGGDNPISEAGAERRGTVPSLSFPQITLWQRPLVTIRVGGQLKEALLDTGADDTVLEDVNLPGKWKPKMIGGIGGFIKVKQYDSILIEICGHRAIGTVLVGPTPVNIIGRNMLTQIGCTLHFPISPIETVPVKLKPGMDGPKVKQWPLTEEKIKALTEICMEMEKEGKISKIGPENPYNTPVFAIKKKDSTKWRKLVDFRELNKRTQDFWEVQLGIPHPAGLKKKKSVTVLDVGDAYFSVPLDKDFRKYTASTIPSTNNETPGVRYQYNVLPQGWKGSPAIFQYSMTKILDPFRAKNPDIVIYQYMDDLYVGSDLEIGQHRTKIEELREHLLKWGLTTPDKKHQKEPPFLWMGYELHPDKWTVQPIQLPDKDSWTVNDIQKLVGKLNWASQIYPGIKVKQLCKLLRGAKALTDIVPLTTEAELELAENREILKEPVHGAYYDPSKDLIAEIQKQGQGQWTYQIYQEPFKNLKTGKYAKMRSAHTNDVKQLTEAVQKISLESIVIWGKTPKFRLPILKETWDTWWTEYWQATWIPEWEFVNTPPLVKLWYQLETEPIVGAETFYVDGASNRETKKGKAGYVTDRGRQKAVSLTETTNQKAELQAIQLALQDSGSEVNIVTDSQYALGIIQAQPDKSESELVNQIIEQLIKKEKVYLSWVPAHKGIGGNEQVDKLVSAGIRKVLFLDGIDKAQEEHEKYHNNWRAMASDFNIPAVVAKEIVASCDKCQLKGEAMHGQVDCSPGIWQLDCTHLEGKIILVAVHVASGYLEAEVIPAETGQETAYFLLKLAGRWPVKTIHTDNGTNFTSATVKAACWWAGIQQEFGIPYNPQSQGVVESMNKELKKIIGQIRDQAEHLKTAVQMAVFIHNFKRKGGIGGYSAGERTIDIIATDIQTRELQKQIIKIQNFRVYYRDSRDPVWKGPAKLLWKGEGAVVIQDNSEIKVVPRRKAKIIRDYGKQMAGDDCVAGRQDED.

A lipid anchor (N-myristoyl glycine; by host) is attached at Gly-2. Residues 7-31 form an interaction with Gp41 region; the sequence is VLSGGKLDAWEKIRLRPGGKKKYRL. Residues 8-43 form an interaction with host CALM1 region; sequence LSGGKLDAWEKIRLRPGGKKKYRLKHLVWASRELER. The tract at residues 12 to 19 is interaction with host AP3D1; it reads KLDAWEKI. Residues 14 to 33 are interaction with membrane phosphatidylinositol 4,5-bisphosphate and RNA; the sequence is DAWEKIRLRPGGKKKYRLKH. The Nuclear export signal signature appears at 16–22; it reads WEKIRLR. Positions 26 to 32 match the Nuclear localization signal motif; that stretch reads KKKYRLK. Residues 73 to 77 form an interaction with membrane phosphatidylinositol 4,5-bisphosphate region; that stretch reads EELKS. Tyr-128 is modified (phosphotyrosine; by host). Residues 185–223 are interaction with human PPIA/CYPA and NUP153; that stretch reads NTVGGHQAAMQMLKDTINEEAAEWDRLHPTQAGPIPPGQ. A dimerization/Multimerization of capsid protein p24 region spans residues 273-359; the sequence is YSPVGILDIR…GGPSHKARVL (87 aa). 2 consecutive CCHC-type zinc fingers follow at residues 385-402 and 406-423; these read VKCF…NCRA and KGCW…DCTE. The interval 451–474 is disordered; it reads VSPASRELQVRGGDNPISEAGAER. Residues 484 to 488 form a dimerization of protease region; that stretch reads PQITL. Positions 503–572 constitute a Peptidase A2 domain; the sequence is KEALLDTGAD…TPVNIIGRNM (70 aa). Asp-508 acts as the For protease activity; shared with dimeric partner in catalysis. Dimerization of protease stretches follow at residues 532–538 and 571–583; these read GIGGFIK and NMLT…LHFP. A Reverse transcriptase domain is found at 626 to 816; it reads EGKISKIGPE…PPFLWMGYEL (191 aa). The Mg(2+) site is built by Asp-692, Asp-767, and Asp-768. Residues 809-817 form an RT 'primer grip' region; sequence FLWMGYELH. A Tryptophan repeat motif motif is present at residues 980–996; that stretch reads WDTWWTEYWQATWIPEW. An RNase H type-1 domain is found at 1016–1139; it reads IVGAETFYVD…VDKLVSAGIR (124 aa). Positions 1025, 1060, 1080, and 1131 each coordinate Mg(2+). The Integrase-type zinc finger occupies 1145-1186; the sequence is DGIDKAQEEHEKYHNNWRAMASDFNIPAVVAKEIVASCDKCQ. 4 residues coordinate Zn(2+): His-1154, His-1158, Cys-1182, and Cys-1185. An Integrase catalytic domain is found at 1196–1346; sequence VDCSPGIWQL…SAGERTIDII (151 aa). 3 residues coordinate Mg(2+): Asp-1206, Asp-1258, and Glu-1294. Positions 1365-1412 form a DNA-binding region, integrase-type; the sequence is FRVYYRDSRDPVWKGPAKLLWKGEGAVVIQDNSEIKVVPRRKAKIIRD.

Homotrimer; further assembles as hexamers of trimers. Interacts with gp41 (via C-terminus). Interacts with host CALM1; this interaction induces a conformational change in the Matrix protein, triggering exposure of the myristate group. Interacts with host AP3D1; this interaction allows the polyprotein trafficking to multivesicular bodies during virus assembly. Part of the pre-integration complex (PIC) which is composed of viral genome, matrix protein, Vpr and integrase. As to quaternary structure, homodimer; the homodimer further multimerizes as homohexamers or homopentamers. Interacts with human PPIA/CYPA; This interaction stabilizes the capsid. Interacts with human NUP153. Interacts with host PDZD8; this interaction stabilizes the capsid. Interacts with monkey TRIM5; this interaction destabilizes the capsid. In terms of assembly, homodimer, whose active site consists of two apposed aspartic acid residues. Heterodimer of p66 RT and p51 RT (RT p66/p51). Heterodimerization of RT is essential for DNA polymerase activity. The overall folding of the subdomains is similar in p66 RT and p51 RT but the spatial arrangements of the subdomains are dramatically different. As to quaternary structure, homotetramer; may further associate as a homohexadecamer. Part of the pre-integration complex (PIC) which is composed of viral genome, matrix protein, Vpr and integrase. Interacts with human SMARCB1/INI1 and human PSIP1/LEDGF isoform 1. Interacts with human KPNA3; this interaction might play a role in nuclear import of the pre-integration complex. Interacts with human NUP153; this interaction might play a role in nuclear import of the pre-integration complex. Requires Mg(2+) as cofactor. Specific enzymatic cleavages by the viral protease yield mature proteins. The protease is released by autocatalytic cleavage. The polyprotein is cleaved during and after budding, this process is termed maturation. Proteolytic cleavage of p66 RT removes the RNase H domain to yield the p51 RT subunit. Nucleocapsid protein p7 might be further cleaved after virus entry. Post-translationally, tyrosine phosphorylated presumably in the virion by a host kinase. Phosphorylation is apparently not a major regulator of membrane association. In terms of processing, phosphorylated possibly by host MAPK1; this phosphorylation is necessary for Pin1-mediated virion uncoating. Methylated by host PRMT6, impairing its function by reducing RNA annealing and the initiation of reverse transcription.

The protein resides in the host cell membrane. It localises to the host endosome. Its subcellular location is the host multivesicular body. It is found in the virion membrane. The protein localises to the host nucleus. The protein resides in the host cytoplasm. It localises to the virion. The catalysed reaction is Specific for a P1 residue that is hydrophobic, and P1' variable, but often Pro.. It carries out the reaction Endohydrolysis of RNA in RNA/DNA hybrids. Three different cleavage modes: 1. sequence-specific internal cleavage of RNA. Human immunodeficiency virus type 1 and Moloney murine leukemia virus enzymes prefer to cleave the RNA strand one nucleotide away from the RNA-DNA junction. 2. RNA 5'-end directed cleavage 13-19 nucleotides from the RNA end. 3. DNA 3'-end directed cleavage 15-20 nucleotides away from the primer terminus.. The enzyme catalyses 3'-end directed exonucleolytic cleavage of viral RNA-DNA hybrid.. It catalyses the reaction DNA(n) + a 2'-deoxyribonucleoside 5'-triphosphate = DNA(n+1) + diphosphate. Protease: The viral protease is inhibited by many synthetic protease inhibitors (PIs), such as amprenavir, atazanavir, indinavir, loprinavir, nelfinavir, ritonavir and saquinavir. Use of protease inhibitors in tritherapy regimens permit more ambitious therapeutic strategies. Reverse transcriptase/ribonuclease H: RT can be inhibited either by nucleoside RT inhibitors (NRTIs) or by non nucleoside RT inhibitors (NNRTIs). NRTIs act as chain terminators, whereas NNRTIs inhibit DNA polymerization by binding a small hydrophobic pocket near the RT active site and inducing an allosteric change in this region. Classical NRTIs are abacavir, adefovir (PMEA), didanosine (ddI), lamivudine (3TC), stavudine (d4T), tenofovir (PMPA), zalcitabine (ddC), and zidovudine (AZT). Classical NNRTIs are atevirdine (BHAP U-87201E), delavirdine, efavirenz (DMP-266), emivirine (I-EBU), and nevirapine (BI-RG-587). The tritherapies used as a basic effective treatment of AIDS associate two NRTIs and one NNRTI. In terms of biological role, mediates, with Gag polyprotein, the essential events in virion assembly, including binding the plasma membrane, making the protein-protein interactions necessary to create spherical particles, recruiting the viral Env proteins, and packaging the genomic RNA via direct interactions with the RNA packaging sequence (Psi). Gag-Pol polyprotein may regulate its own translation, by the binding genomic RNA in the 5'-UTR. At low concentration, the polyprotein would promote translation, whereas at high concentration, the polyprotein would encapsidate genomic RNA and then shut off translation. Functionally, targets the polyprotein to the plasma membrane via a multipartite membrane-binding signal, that includes its myristoylated N-terminus. Matrix protein is part of the pre-integration complex. Implicated in the release from host cell mediated by Vpu. Binds to RNA. Its function is as follows. Forms the conical core that encapsulates the genomic RNA-nucleocapsid complex in the virion. Most core are conical, with only 7% tubular. The core is constituted by capsid protein hexamer subunits. The core is disassembled soon after virion entry. Host restriction factors such as TRIM5-alpha or TRIMCyp bind retroviral capsids and cause premature capsid disassembly, leading to blocks in reverse transcription. Capsid restriction by TRIM5 is one of the factors which restricts HIV-1 to the human species. Host PIN1 apparently facilitates the virion uncoating. On the other hand, interactions with PDZD8 or CYPA stabilize the capsid. Encapsulates and protects viral dimeric unspliced genomic RNA (gRNA). Binds these RNAs through its zinc fingers. Acts as a nucleic acid chaperone which is involved in rearangement of nucleic acid secondary structure during gRNA retrotranscription. Also facilitates template switch leading to recombination. As part of the polyprotein, participates in gRNA dimerization, packaging, tRNA incorporation and virion assembly. In terms of biological role, aspartyl protease that mediates proteolytic cleavages of Gag and Gag-Pol polyproteins during or shortly after the release of the virion from the plasma membrane. Cleavages take place as an ordered, step-wise cascade to yield mature proteins. This process is called maturation. Displays maximal activity during the budding process just prior to particle release from the cell. Also cleaves Nef and Vif, probably concomitantly with viral structural proteins on maturation of virus particles. Hydrolyzes host EIF4GI and PABP1 in order to shut off the capped cellular mRNA translation. The resulting inhibition of cellular protein synthesis serves to ensure maximal viral gene expression and to evade host immune response. Also mediates cleavage of host YTHDF3. Mediates cleavage of host CARD8, thereby activating the CARD8 inflammasome, leading to the clearance of latent HIV-1 in patient CD4(+) T-cells after viral reactivation; in contrast, HIV-1 can evade CARD8-sensing when its protease remains inactive in infected cells prior to viral budding. Functionally, multifunctional enzyme that converts the viral RNA genome into dsDNA in the cytoplasm, shortly after virus entry into the cell. This enzyme displays a DNA polymerase activity that can copy either DNA or RNA templates, and a ribonuclease H (RNase H) activity that cleaves the RNA strand of RNA-DNA heteroduplexes in a partially processive 3' to 5' endonucleasic mode. Conversion of viral genomic RNA into dsDNA requires many steps. A tRNA(3)-Lys binds to the primer-binding site (PBS) situated at the 5'-end of the viral RNA. RT uses the 3' end of the tRNA primer to perform a short round of RNA-dependent minus-strand DNA synthesis. The reading proceeds through the U5 region and ends after the repeated (R) region which is present at both ends of viral RNA. The portion of the RNA-DNA heteroduplex is digested by the RNase H, resulting in a ssDNA product attached to the tRNA primer. This ssDNA/tRNA hybridizes with the identical R region situated at the 3' end of viral RNA. This template exchange, known as minus-strand DNA strong stop transfer, can be either intra- or intermolecular. RT uses the 3' end of this newly synthesized short ssDNA to perform the RNA-dependent minus-strand DNA synthesis of the whole template. RNase H digests the RNA template except for two polypurine tracts (PPTs) situated at the 5'-end and near the center of the genome. It is not clear if both polymerase and RNase H activities are simultaneous. RNase H probably can proceed both in a polymerase-dependent (RNA cut into small fragments by the same RT performing DNA synthesis) and a polymerase-independent mode (cleavage of remaining RNA fragments by free RTs). Secondly, RT performs DNA-directed plus-strand DNA synthesis using the PPTs that have not been removed by RNase H as primers. PPTs and tRNA primers are then removed by RNase H. The 3' and 5' ssDNA PBS regions hybridize to form a circular dsDNA intermediate. Strand displacement synthesis by RT to the PBS and PPT ends produces a blunt ended, linear dsDNA copy of the viral genome that includes long terminal repeats (LTRs) at both ends. Its function is as follows. Integrase catalyzes viral DNA integration into the host chromosome, by performing a series of DNA cutting and joining reactions. This enzyme activity takes place after virion entry into a cell and reverse transcription of the RNA genome in dsDNA. The first step in the integration process is 3' processing. This step requires a complex comprising the viral genome, matrix protein, Vpr and integrase. This complex is called the pre-integration complex (PIC). The integrase protein removes 2 nucleotides from each 3' end of the viral DNA, leaving recessed CA OH's at the 3' ends. In the second step, the PIC enters cell nucleus. This process is mediated through integrase and Vpr proteins, and allows the virus to infect a non dividing cell. This ability to enter the nucleus is specific of lentiviruses, other retroviruses cannot and rely on cell division to access cell chromosomes. In the third step, termed strand transfer, the integrase protein joins the previously processed 3' ends to the 5' ends of strands of target cellular DNA at the site of integration. The 5'-ends are produced by integrase-catalyzed staggered cuts, 5 bp apart. A Y-shaped, gapped, recombination intermediate results, with the 5'-ends of the viral DNA strands and the 3' ends of target DNA strands remaining unjoined, flanking a gap of 5 bp. The last step is viral DNA integration into host chromosome. This involves host DNA repair synthesis in which the 5 bp gaps between the unjoined strands are filled in and then ligated. Since this process occurs at both cuts flanking the HIV genome, a 5 bp duplication of host DNA is produced at the ends of HIV-1 integration. Alternatively, Integrase may catalyze the excision of viral DNA just after strand transfer, this is termed disintegration. This is Gag-Pol polyprotein (gag-pol) from Homo sapiens (Human).